Here is a 256-residue protein sequence, read N- to C-terminus: UPF0259 membrane protein plu2479 (256 aa).

5 helical membrane-spanning segments follow: residues 23–43 (TLTL…LFIP), 89–109 (IFSS…LVAA), 132–152 (LFLL…LMLV), 192–212 (LLVP…FIID), and 221–241 (MAGI…LIYL).

This sequence belongs to the UPF0259 family.

The protein resides in the cell inner membrane. This chain is UPF0259 membrane protein plu2479, found in Photorhabdus laumondii subsp. laumondii (strain DSM 15139 / CIP 105565 / TT01) (Photorhabdus luminescens subsp. laumondii).